The primary structure comprises 330 residues: Methionyl-tRNA formyltransferase (330 aa).

116-119 provides a ligand contact to (6S)-5,6,7,8-tetrahydrofolate; it reads SLLP.

The protein belongs to the Fmt family.

It catalyses the reaction L-methionyl-tRNA(fMet) + (6R)-10-formyltetrahydrofolate = N-formyl-L-methionyl-tRNA(fMet) + (6S)-5,6,7,8-tetrahydrofolate + H(+). Attaches a formyl group to the free amino group of methionyl-tRNA(fMet). The formyl group appears to play a dual role in the initiator identity of N-formylmethionyl-tRNA by promoting its recognition by IF2 and preventing the misappropriation of this tRNA by the elongation apparatus. The chain is Methionyl-tRNA formyltransferase from Nitratidesulfovibrio vulgaris (strain ATCC 29579 / DSM 644 / CCUG 34227 / NCIMB 8303 / VKM B-1760 / Hildenborough) (Desulfovibrio vulgaris).